The sequence spans 82 residues: Cytochrome b559 subunit alpha (82 aa).

The helical transmembrane segment at 21–35 (VIHSVTIPSLFIAGW) threads the bilayer. Position 23 (His-23) interacts with heme.

This sequence belongs to the PsbE/PsbF family. In terms of assembly, heterodimer of an alpha subunit and a beta subunit. PSII is composed of 1 copy each of membrane proteins PsbA, PsbB, PsbC, PsbD, PsbE, PsbF, PsbH, PsbI, PsbJ, PsbK, PsbL, PsbM, PsbT, PsbX, PsbY, PsbZ, Psb30/Ycf12, at least 3 peripheral proteins of the oxygen-evolving complex and a large number of cofactors. It forms dimeric complexes. Requires heme b as cofactor.

It is found in the plastid. Its subcellular location is the chloroplast thylakoid membrane. In terms of biological role, this b-type cytochrome is tightly associated with the reaction center of photosystem II (PSII). PSII is a light-driven water:plastoquinone oxidoreductase that uses light energy to abstract electrons from H(2)O, generating O(2) and a proton gradient subsequently used for ATP formation. It consists of a core antenna complex that captures photons, and an electron transfer chain that converts photonic excitation into a charge separation. The chain is Cytochrome b559 subunit alpha from Ostreococcus tauri.